The sequence spans 311 residues: Aquaporin Lacbi1:392091 (311 aa).

Over 1-16 (MHPQVASLFDNVYEDL) the chain is Cytoplasmic. The helical transmembrane segment at 17–37 (AAATLEFIGTAFFLLFGLGGI) threads the bilayer. The Extracellular segment spans residues 38–56 (QASTAEDTASGQPPASGIE). Residues 57–77 (HVLYISTCMGLSLVVSAWLFF) traverse the membrane as a helical segment. Position 78 (Arg-78) is a topological domain, cytoplasmic. Residues 79–99 (VTGGLFNPNISFALLLVGGLK) form a helical membrane-spanning segment. The NPA 1 signature appears at 85–87 (NPN). Pro-100 is a topological domain (extracellular). The helical transmembrane segment at 101-121 (LRFVLFCIAQLTGAIAGAAIV) threads the bilayer. Topologically, residues 122-143 (RGLTSAPLSVNNVLQQGTSAAQ) are cytoplasmic. The chain crosses the membrane as a helical span at residues 144–164 (GVFIEMFITAALVLSVLMLAA). Over 165-168 (EKHE) the chain is Extracellular. Residues 169-189 (ATPFAPVGIGLTLFACHLFAV) traverse the membrane as a helical segment. Residues 190-215 (YYTGAAMNSARAFGPAVISGFPEPQH) lie on the Cytoplasmic side of the membrane. An NPA 2 motif is present at residues 197 to 199 (NSA). Residues 216-236 (WVYWVGPFLGSLLGAGFYATL) form a helical membrane-spanning segment. Over 237–311 (KHYKYWHLNP…TSSRTNFSPV (75 aa)) the chain is Extracellular. The segment at 276–311 (DEETRNGCASNEEGVRATGDEKSSNATSSRTNFSPV) is disordered. A compositionally biased stretch (basic and acidic residues) spans 288–298 (EGVRATGDEKS). The span at 299–311 (SNATSSRTNFSPV) shows a compositional bias: polar residues. The N-linked (GlcNAc...) asparagine glycan is linked to Asn-300.

The protein belongs to the MIP/aquaporin (TC 1.A.8) family.

Its subcellular location is the membrane. The catalysed reaction is H2O(in) = H2O(out). The enzyme catalyses NH4(+)(in) = NH4(+)(out). Water channel required to facilitate the transport of water across membranes. Also enables low but statistically significant ammonium permeability. May be involved in fungal nitrogen (ammonium) support of the plant host in symbiosis. In Laccaria bicolor (strain S238N-H82 / ATCC MYA-4686) (Bicoloured deceiver), this protein is Aquaporin Lacbi1:392091.